A 146-amino-acid chain; its full sequence is Hemoglobin subunit beta (146 aa).

V1 carries the post-translational modification N-acetylvaline. One can recognise a Globin domain in the interval 2–146 (HLTADEKSAV…VATALGHKYH (145 aa)). T12 is modified (phosphothreonine). Residue S44 is modified to Phosphoserine. At K59 the chain carries N6-acetyllysine. H63 lines the heme b pocket. K82 is modified (N6-acetyllysine). H92 provides a ligand contact to heme b. C93 is subject to S-nitrosocysteine. K144 is subject to N6-acetyllysine.

The protein belongs to the globin family. As to quaternary structure, heterotetramer of two alpha chains and two beta chains. As to expression, red blood cells.

In terms of biological role, involved in oxygen transport from the lung to the various peripheral tissues. This Antrozous pallidus (Pallid bat) protein is Hemoglobin subunit beta (HBB).